The following is a 188-amino-acid chain: Acireductone dioxygenase (188 aa).

The interval 1-20 (MSRLRIFADSNPTTPHFDSR) is disordered. Positions 97, 99, 103, and 141 each coordinate Fe(2+). 4 residues coordinate Ni(2+): histidine 97, histidine 99, glutamate 103, and histidine 141.

This sequence belongs to the acireductone dioxygenase (ARD) family. In terms of assembly, monomer. Requires Fe(2+) as cofactor. It depends on Ni(2+) as a cofactor.

It catalyses the reaction 1,2-dihydroxy-5-(methylsulfanyl)pent-1-en-3-one + O2 = 3-(methylsulfanyl)propanoate + CO + formate + 2 H(+). The enzyme catalyses 1,2-dihydroxy-5-(methylsulfanyl)pent-1-en-3-one + O2 = 4-methylsulfanyl-2-oxobutanoate + formate + 2 H(+). It functions in the pathway amino-acid biosynthesis; L-methionine biosynthesis via salvage pathway; L-methionine from S-methyl-5-thio-alpha-D-ribose 1-phosphate: step 5/6. In terms of biological role, catalyzes 2 different reactions between oxygen and the acireductone 1,2-dihydroxy-3-keto-5-methylthiopentene (DHK-MTPene) depending upon the metal bound in the active site. Fe-containing acireductone dioxygenase (Fe-ARD) produces formate and 2-keto-4-methylthiobutyrate (KMTB), the alpha-ketoacid precursor of methionine in the methionine recycle pathway. Ni-containing acireductone dioxygenase (Ni-ARD) produces methylthiopropionate, carbon monoxide and formate, and does not lie on the methionine recycle pathway. The protein is Acireductone dioxygenase of Xanthomonas campestris pv. campestris (strain 8004).